A 160-amino-acid polypeptide reads, in one-letter code: Cytochrome b6-f complex subunit 4 (160 aa).

3 consecutive transmembrane segments (helical) span residues 36–56 (IFYM…GLAV), 96–116 (LGVL…FIKI), and 131–151 (TVFL…ALPI).

The protein belongs to the cytochrome b family. PetD subfamily. The 4 large subunits of the cytochrome b6-f complex are cytochrome b6, subunit IV (17 kDa polypeptide, petD), cytochrome f and the Rieske protein, while the 4 small subunits are petG, petL, petM and petN. The complex functions as a dimer.

Its subcellular location is the plastid. It localises to the chloroplast thylakoid membrane. Component of the cytochrome b6-f complex, which mediates electron transfer between photosystem II (PSII) and photosystem I (PSI), cyclic electron flow around PSI, and state transitions. The sequence is that of Cytochrome b6-f complex subunit 4 from Auxenochlorella protothecoides (Green microalga).